A 359-amino-acid polypeptide reads, in one-letter code: Transcription factor bHLH130 (359 aa).

Ser-60 is subject to Phosphoserine. The interval 161 to 186 is disordered; the sequence is EEDEESPSNSNGLRRHCSLSSRPPSS. Residues 167–184 are compositionally biased toward polar residues; that stretch reads PSNSNGLRRHCSLSSRPP. One can recognise a bHLH domain in the interval 285–335; sequence CATHPRSIAERVRRTRISERMRKLQELVPNMDKQTNTSDMLDLAVDYIKDL.

In terms of assembly, homodimer.

It localises to the nucleus. The sequence is that of Transcription factor bHLH130 (BHLH130) from Arabidopsis thaliana (Mouse-ear cress).